A 283-amino-acid polypeptide reads, in one-letter code: Phosphatidylserine decarboxylase proenzyme (283 aa).

Residues Asp-89, His-146, and Ser-249 each act as charge relay system; for autoendoproteolytic cleavage activity in the active site. The active-site Schiff-base intermediate with substrate; via pyruvic acid; for decarboxylase activity is Ser-249. Ser-249 carries the pyruvic acid (Ser); by autocatalysis modification.

It belongs to the phosphatidylserine decarboxylase family. PSD-B subfamily. Prokaryotic type I sub-subfamily. Heterodimer of a large membrane-associated beta subunit and a small pyruvoyl-containing alpha subunit. Pyruvate serves as cofactor. Is synthesized initially as an inactive proenzyme. Formation of the active enzyme involves a self-maturation process in which the active site pyruvoyl group is generated from an internal serine residue via an autocatalytic post-translational modification. Two non-identical subunits are generated from the proenzyme in this reaction, and the pyruvate is formed at the N-terminus of the alpha chain, which is derived from the carboxyl end of the proenzyme. The autoendoproteolytic cleavage occurs by a canonical serine protease mechanism, in which the side chain hydroxyl group of the serine supplies its oxygen atom to form the C-terminus of the beta chain, while the remainder of the serine residue undergoes an oxidative deamination to produce ammonia and the pyruvoyl prosthetic group on the alpha chain. During this reaction, the Ser that is part of the protease active site of the proenzyme becomes the pyruvoyl prosthetic group, which constitutes an essential element of the active site of the mature decarboxylase.

It is found in the cell membrane. The catalysed reaction is a 1,2-diacyl-sn-glycero-3-phospho-L-serine + H(+) = a 1,2-diacyl-sn-glycero-3-phosphoethanolamine + CO2. Its pathway is phospholipid metabolism; phosphatidylethanolamine biosynthesis; phosphatidylethanolamine from CDP-diacylglycerol: step 2/2. In terms of biological role, catalyzes the formation of phosphatidylethanolamine (PtdEtn) from phosphatidylserine (PtdSer). This chain is Phosphatidylserine decarboxylase proenzyme, found in Legionella pneumophila (strain Lens).